Here is a 901-residue protein sequence, read N- to C-terminus: Protein translocase subunit SecA (901 aa).

ATP contacts are provided by residues Q87, 105-109 (GEGKT), and D512. C885, C887, C896, and H897 together coordinate Zn(2+).

This sequence belongs to the SecA family. In terms of assembly, monomer and homodimer. Part of the essential Sec protein translocation apparatus which comprises SecA, SecYEG and auxiliary proteins SecDF-YajC and YidC. The cofactor is Zn(2+).

It localises to the cell inner membrane. The protein localises to the cytoplasm. It catalyses the reaction ATP + H2O + cellular proteinSide 1 = ADP + phosphate + cellular proteinSide 2.. Its function is as follows. Part of the Sec protein translocase complex. Interacts with the SecYEG preprotein conducting channel. Has a central role in coupling the hydrolysis of ATP to the transfer of proteins into and across the cell membrane, serving both as a receptor for the preprotein-SecB complex and as an ATP-driven molecular motor driving the stepwise translocation of polypeptide chains across the membrane. The polypeptide is Protein translocase subunit SecA (Salmonella enteritidis PT4 (strain P125109)).